The chain runs to 90 residues: Toxin 3FTx-Psa1 (90 aa).

The N-terminal stretch at 1–21 (MKTLPLVLAVVAFVYLDLAHT) is a signal peptide. Disulfide bonds link C24–C43, C36–C61, C65–C76, and C77–C82.

Belongs to the three-finger toxin family. Ancestral subfamily. In terms of tissue distribution, expressed by the venom gland.

Its subcellular location is the secreted. This Psammophis mossambicus (Olive sand snake) protein is Toxin 3FTx-Psa1.